We begin with the raw amino-acid sequence, 1400 residues long: DNA-directed RNA polymerase subunit beta' (1400 aa).

The Zn(2+) site is built by C71, C73, C86, and C89. D462, D464, and D466 together coordinate Mg(2+). Positions 810, 884, 891, and 894 each coordinate Zn(2+).

The protein belongs to the RNA polymerase beta' chain family. The RNAP catalytic core consists of 2 alpha, 1 beta, 1 beta' and 1 omega subunit. When a sigma factor is associated with the core the holoenzyme is formed, which can initiate transcription. It depends on Mg(2+) as a cofactor. Requires Zn(2+) as cofactor.

The catalysed reaction is RNA(n) + a ribonucleoside 5'-triphosphate = RNA(n+1) + diphosphate. Its function is as follows. DNA-dependent RNA polymerase catalyzes the transcription of DNA into RNA using the four ribonucleoside triphosphates as substrates. The polypeptide is DNA-directed RNA polymerase subunit beta' (Rhodopseudomonas palustris (strain BisA53)).